The chain runs to 159 residues: Transcription antitermination protein NusB (159 aa).

The protein belongs to the NusB family.

Its function is as follows. Involved in transcription antitermination. Required for transcription of ribosomal RNA (rRNA) genes. Binds specifically to the boxA antiterminator sequence of the ribosomal RNA (rrn) operons. This is Transcription antitermination protein NusB from Xanthomonas axonopodis pv. citri (strain 306).